A 529-amino-acid chain; its full sequence is FAD-binding monooxygenase BOA2 (529 aa).

FAD is bound by residues 58 to 61, 70 to 71, and Y76; these read VWWK and DI. 68–70 contacts NADP(+); sequence ACD. NADP(+) contacts are provided by residues 198–204 and 221–222; these read TGPSACQ and RS.

This sequence belongs to the FAD-binding monooxygenase family. FAD is required as a cofactor.

It participates in polyketide biosynthesis. Functionally, FAD-binding monooxygenase; part of the gene cluster A that mediates the biosynthesis of botcinic acid and its botcinin derivatives, acetate-derived polyketides that contribute to virulence when combined with the sesquiterpene botrydial. Botcinic acid and its derivatives have been shown to induce chlorosis and necrosis during host plant infection, but also have antifungal activities. Two polyketide synthases, BOA6 and BOA9, are involved in the biosynthesis of botcinins. BOA6 mediates the formation of the per-methylated tetraketide core by condensation of four units of malonyl-CoA with one unit of acetyl-CoA, which would be methylated in activated methylene groups to yield a bicyclic acid intermediate that could then either be converted to botrylactone derivatives or lose the starter acetate unit through a retro-Claisen type C-C bond cleavage to yield botcinin derivatives. The second polyketide synthase, BOA9, is probably required for the biosynthesis of the tetraketide side chain of botcinins. The methyltransferase (MT) domain within BOA6 is probably responsible for the incorporation of four methyl groups. The trans-enoyl reductase BOA5 might take over the enoyl reductase function of BOA6 that misses an ER domain. The monooxygenases BOA2, BOA3 and BOA4 might be involved in further hydroxylations at C4, C5 and C8, whereas BOA7, close to BOA9, could potentially be involved in the hydroxylation at C4 in the side chain of botcinins. The sequence is that of FAD-binding monooxygenase BOA2 from Botryotinia fuckeliana (strain B05.10) (Noble rot fungus).